The sequence spans 325 residues: Retinal homeobox protein Rx-B (325 aa).

Residues 32 to 39 (HSIEAILG) carry the Octapeptide motif motif. The span at 75 to 87 (TEEIHPQQEHLED) shows a compositional bias: basic and acidic residues. The segment at 75 to 136 (TEEIHPQQEH…KKKHRRNRTT (62 aa)) is disordered. Positions 99–117 (AKTSSECLSPGLSTSNSDN) are enriched in polar residues. The homeobox DNA-binding region spans 130 to 189 (HRRNRTTFTTYQLHELERAFEKSHYPDVYSREELAMKVNLPEVRVQVWFQNRRAKWRRQE). The OAR motif lies at 302 to 315 (NSIASLRMKAKEHI). Positions 308–312 (RMKAK) match the Nuclear localization signal motif.

Belongs to the paired homeobox family. Bicoid subfamily. As to expression, highly expressed in anterior neural plate followed by neural retina, pigmented epithelium, in pineal gland, diencephalon floor and epiphysis. At later stages, the neuroretina remains the primary site of expression. No expression in the developing lens and cornea.

Its subcellular location is the nucleus. Functionally, plays a critical role in eye formation by regulating the initial specification of retinal cells and/or their subsequent proliferation. This chain is Retinal homeobox protein Rx-B (rax-b), found in Xenopus laevis (African clawed frog).